The sequence spans 397 residues: L-asparaginase-like protein CG4372 (397 aa).

A signal peptide spans 1–22 (MLAQSCCLRLLILLLLFTTIGS). 3 cysteine pairs are disulfide-bonded: C90/C95, C189/C205, and C344/C371.

Belongs to the Ntn-hydrolase family.

In Drosophila melanogaster (Fruit fly), this protein is L-asparaginase-like protein CG4372.